The sequence spans 322 residues: MVTVLDTVSKPRPRHPEKAHRPDQEVLRKPDWIRVKAPTSRGYLETREIVKTNKLVTVCEEAGCPNIGECWDKKHATFMIMGEICTRACAFCNVATGIPGPLDPNEPANVAKAVREMGLNHVVITSVDRDDLNDGGAQHFADVIQAIRAATPQTTIEILTPDFLRKDGALELVVAAKPDVFNHNLETVPSKYLTVRPGARYFHSIRLLQRVKEIDPSIFTKSGIMVGLGEERNEVLQLMDDLRSADVDFITIGQYLQPTKKHHPVKKFVTPEEFKSYETIAYTKGFLMASSSPLTRSSHHAGEDFERLRAAREARLSLAKTA.

The tract at residues 1–24 is disordered; it reads MVTVLDTVSKPRPRHPEKAHRPDQ. The span at 14-24 shows a compositional bias: basic and acidic residues; sequence RHPEKAHRPDQ. [4Fe-4S] cluster is bound by residues cysteine 59, cysteine 64, cysteine 70, cysteine 85, cysteine 89, cysteine 92, and serine 298. One can recognise a Radical SAM core domain in the interval 71-287; the sequence is WDKKHATFMI…ETIAYTKGFL (217 aa).

Belongs to the radical SAM superfamily. Lipoyl synthase family. [4Fe-4S] cluster is required as a cofactor.

It is found in the cytoplasm. It carries out the reaction [[Fe-S] cluster scaffold protein carrying a second [4Fe-4S](2+) cluster] + N(6)-octanoyl-L-lysyl-[protein] + 2 oxidized [2Fe-2S]-[ferredoxin] + 2 S-adenosyl-L-methionine + 4 H(+) = [[Fe-S] cluster scaffold protein] + N(6)-[(R)-dihydrolipoyl]-L-lysyl-[protein] + 4 Fe(3+) + 2 hydrogen sulfide + 2 5'-deoxyadenosine + 2 L-methionine + 2 reduced [2Fe-2S]-[ferredoxin]. It participates in protein modification; protein lipoylation via endogenous pathway; protein N(6)-(lipoyl)lysine from octanoyl-[acyl-carrier-protein]: step 2/2. Functionally, catalyzes the radical-mediated insertion of two sulfur atoms into the C-6 and C-8 positions of the octanoyl moiety bound to the lipoyl domains of lipoate-dependent enzymes, thereby converting the octanoylated domains into lipoylated derivatives. The protein is Lipoyl synthase of Chelativorans sp. (strain BNC1).